The following is a 320-amino-acid chain: Zygote arrest protein 1 (320 aa).

Disordered stretches follow at residues 106-130 (ELRRRRKLNPGPPGTPQKTEGEVRY) and 155-208 (DRPA…AEGS). A 3CxxC-type zinc finger spans residues 222–305 (KYGYYHCREC…RQDLCGRCKG (84 aa)).

It belongs to the ZAR1 family.

It localises to the cytoplasm. It is found in the cytoplasmic ribonucleoprotein granule. Its function is as follows. mRNA-binding protein required for maternal mRNA storage, translation and degradation during oocyte maturation. Probably promotes formation of some phase-separated membraneless compartment that stores maternal mRNAs in oocytes: acts by undergoing liquid-liquid phase separation upon binding to maternal mRNAs. Binds to the 3'-UTR of maternal mRNAs, inhibiting their translation. The sequence is that of Zygote arrest protein 1 from Takifugu rubripes (Japanese pufferfish).